A 128-amino-acid chain; its full sequence is Large ribosomal subunit protein eL31 (128 aa).

The protein belongs to the eukaryotic ribosomal protein eL31 family.

This Drosophila virilis (Fruit fly) protein is Large ribosomal subunit protein eL31 (RpL31).